A 104-amino-acid chain; its full sequence is Flagellar hook-basal body complex protein FliE (104 aa).

This sequence belongs to the FliE family.

The protein localises to the bacterial flagellum basal body. This is Flagellar hook-basal body complex protein FliE from Escherichia coli (strain 55989 / EAEC).